Reading from the N-terminus, the 268-residue chain is MSSALMPVRTHIVIPARLKSTRLPNKPLLTIHGKPMILWVAEKAQLADFADDMCIATDDESVAKVCAEAGFDVVMTRSDHASGTDRLAEVAAIKGWAAHDIVVNMQGDEPLIPPLLLEQVKTLLVQDAESVMATLCEPIEDYNTFIHPSVVKVVSQNTNNQQRAIYFSRAPIPCDRDVVLSDEDNTQAPKNAYRHLGLYAYRVSLLQQFVHWSQTPLEILESLEQLRVLENGGHIAIAKAACPLPAGVDTQEDLDRLNAMSLTAFQDD.

Belongs to the KdsB family.

The protein localises to the cytoplasm. The enzyme catalyses 3-deoxy-alpha-D-manno-oct-2-ulosonate + CTP = CMP-3-deoxy-beta-D-manno-octulosonate + diphosphate. It functions in the pathway nucleotide-sugar biosynthesis; CMP-3-deoxy-D-manno-octulosonate biosynthesis; CMP-3-deoxy-D-manno-octulosonate from 3-deoxy-D-manno-octulosonate and CTP: step 1/1. Its pathway is bacterial outer membrane biogenesis; lipopolysaccharide biosynthesis. Functionally, activates KDO (a required 8-carbon sugar) for incorporation into bacterial lipopolysaccharide in Gram-negative bacteria. The sequence is that of 3-deoxy-manno-octulosonate cytidylyltransferase from Psychrobacter arcticus (strain DSM 17307 / VKM B-2377 / 273-4).